The sequence spans 55 residues: ATP synthase protein 8 (55 aa).

Residues 7-24 (NPWLFIMLMSWLTFSLII) form a helical membrane-spanning segment. Positions 35–55 (NPPSNKTPTTTKTSPWTWPWT) are disordered. A compositionally biased stretch (low complexity) spans 37 to 55 (PSNKTPTTTKTSPWTWPWT).

The protein belongs to the ATPase protein 8 family. In terms of assembly, F-type ATPases have 2 components, CF(1) - the catalytic core - and CF(0) - the membrane proton channel.

The protein localises to the mitochondrion membrane. Its function is as follows. Mitochondrial membrane ATP synthase (F(1)F(0) ATP synthase or Complex V) produces ATP from ADP in the presence of a proton gradient across the membrane which is generated by electron transport complexes of the respiratory chain. F-type ATPases consist of two structural domains, F(1) - containing the extramembraneous catalytic core and F(0) - containing the membrane proton channel, linked together by a central stalk and a peripheral stalk. During catalysis, ATP synthesis in the catalytic domain of F(1) is coupled via a rotary mechanism of the central stalk subunits to proton translocation. Part of the complex F(0) domain. Minor subunit located with subunit a in the membrane. The chain is ATP synthase protein 8 (MT-ATP8) from Corythaeola cristata (Great blue turaco).